The chain runs to 121 residues: MSKLTIEQFIAAIKEMSMLELNDLVKAIETEFGVSAAAPVAVAAAPAAAEAPTEVTIKLVEAGANKVGVIKLIREITGLGLMEAKTAAETAGSVIKEDVKTEEANEIKKKFDELGAKVQLV.

It belongs to the bacterial ribosomal protein bL12 family. In terms of assembly, homodimer. Part of the ribosomal stalk of the 50S ribosomal subunit. Forms a multimeric L10(L12)X complex, where L10 forms an elongated spine to which 2 to 4 L12 dimers bind in a sequential fashion. Binds GTP-bound translation factors.

Forms part of the ribosomal stalk which helps the ribosome interact with GTP-bound translation factors. Is thus essential for accurate translation. This chain is Large ribosomal subunit protein bL12, found in Ureaplasma urealyticum serovar 10 (strain ATCC 33699 / Western).